The chain runs to 583 residues: Epsin-2 (583 aa).

Residues R8, K11, R25, N30, R63, and H73 each coordinate a 1,2-diacyl-sn-glycero-3-phospho-(1D-myo-inositol-4,5-bisphosphate). Positions N12 to R144 constitute an ENTH domain. Over residues Q165–H181 the composition is skewed to polar residues. The segment at Q165–G217 is disordered. Omega-N-methylarginine is present on R170. Phosphoserine occurs at positions 173, 192, and 195. Polar residues predominate over residues H197–S216. UIM domains are found at residues E218–E237 and G243–V262. 2 disordered regions span residues S293–P384 and T411–F457. 4 tandem repeats follow at residues E301 to W303, N313 to W315, D326 to W328, and D340 to W342. The segment covering E301 to W315 has biased composition (polar residues). The interval E301–W377 is 6 X 3 AA repeats of [DE]-P-W. Polar residues predominate over residues T346–K355. Tandem repeats lie at residues D358 to W360 and D375 to W377. S431 carries the phosphoserine modification. Over residues S437 to S448 the composition is skewed to low complexity. The residue at position 453 (T453) is a Phosphothreonine. Repeat copies occupy residues N482 to F484 and N496 to F498. Positions N482–F581 are 3 X 3 AA repeats of N-P-F. S514 carries the phosphoserine modification. Repeat unit 3 spans residues N579–F581.

This sequence belongs to the epsin family. As to quaternary structure, binds AP-2 and clathrin. Interacts with ITSN1. Interacts with UBQLN2. Binds EPS15. Ubiquitinated. As to expression, highly expressed in brain. Detected at lower levels in lung, liver, muscle and testis.

It is found in the cytoplasm. Plays a role in the formation of clathrin-coated invaginations and endocytosis. The sequence is that of Epsin-2 (Epn2) from Rattus norvegicus (Rat).